A 2025-amino-acid chain; its full sequence is E3 ubiquitin-protein ligase TRIP12 (2025 aa).

The span at 1–10 (MSNRPNNNPG) shows a compositional bias: polar residues. The interval 1–404 (MSNRPNNNPG…SGESESDDSE (404 aa)) is disordered. At serine 2 the chain carries N-acetylserine. Residue serine 12 is modified to Phosphoserine. A compositionally biased stretch (polar residues) spans 18 to 27 (RNTAGAQPQD). The span at 48–70 (DPDRANTSERQKTGQVPKKDNSR) shows a compositional bias: basic and acidic residues. Residues serine 77, serine 85, and serine 100 each carry the phosphoserine modification. Polar residues-rich tracts occupy residues 78–88 (PDYNRTNSPSS), 99–108 (ESLSETNKPP), and 119–132 (EQQL…STSK). Composition is skewed to low complexity over residues 154 to 166 (SSCV…SEST) and 175 to 216 (PTKL…SSTV). An N6-acetyllysine modification is found at lysine 181. Residues 280–290 (PGSSKSETSKP) are compositionally biased toward polar residues. Residues serine 310 and serine 312 each carry the phosphoserine modification. The span at 326 to 338 (QKTTGSCASTSRR) shows a compositional bias: polar residues. A compositionally biased stretch (basic and acidic residues) spans 346 to 358 (GAAEARRQEKMAD). Residues 362-371 (NQETVNSSAA) are compositionally biased toward polar residues. Positions 379 to 397 (GAAASSSVAGAVGMTTSGE) are enriched in low complexity. The WWE domain occupies 755–869 (MLKKGNAQNT…DPELAKSFIK (115 aa)). The segment at 970–1077 (ESLLTSPPKA…QSPKSSFLAS (108 aa)) is disordered. Serine 975 bears the Phosphoserine mark. The span at 983-1006 (GSGSLGSTTPASSGTATAATNASA) shows a compositional bias: low complexity. Phosphoserine is present on residues serine 1024 and serine 1030. The span at 1034–1047 (KRKRLPKRGPRRPK) shows a compositional bias: basic residues. Serine 1049 carries the post-translational modification Phosphoserine. Residues 1050–1059 (PPRDDDKVDN) show a composition bias toward basic and acidic residues. Residues 1062-1073 (KSPTTTQSPKSS) are compositionally biased toward low complexity. Serine 1063, serine 1350, serine 1355, serine 1362, and serine 1409 each carry phosphoserine. Threonine 1410 carries the phosphothreonine modification. Disordered regions lie at residues 1440-1466 (SSKD…NAKK) and 1601-1620 (TNPE…PRLD). Lysine 1458 bears the N6-acetyllysine mark. Serine 1460 is modified (phosphoserine). The K-box stretch occupies residues 1529–1603 (EIIPTSEFIN…AMQRLLDTNP (75 aa)). One can recognise an HECT domain in the interval 1918–2025 (PDHGYTHDSR…REGQQSFHLS (108 aa)). Cysteine 1992 serves as the catalytic Glycyl thioester intermediate.

It belongs to the UPL family. K-HECT subfamily. As to quaternary structure, interacts with MYC; leading to disrupt interaction with isoform p19ARF/ARF of CDKN2A. Interacts with TRADD; leading to disrupt interaction with isoform p19ARF/ARF of CDKN2A. Interacts with SMARCC1; leading to disrupt interaction with SMARCE1.

Its subcellular location is the nucleus. The protein localises to the nucleoplasm. It carries out the reaction S-ubiquitinyl-[E2 ubiquitin-conjugating enzyme]-L-cysteine + [acceptor protein]-L-lysine = [E2 ubiquitin-conjugating enzyme]-L-cysteine + N(6)-ubiquitinyl-[acceptor protein]-L-lysine.. It participates in protein modification; protein ubiquitination. Its function is as follows. E3 ubiquitin-protein ligase involved in ubiquitin fusion degradation (UFD) pathway and regulation of DNA repair. Part of the ubiquitin fusion degradation (UFD) pathway, a process that mediates ubiquitination of protein at their N-terminus, regardless of the presence of lysine residues in target proteins. Acts as a key regulator of DNA damage response by acting as a suppressor of RNF168, an E3 ubiquitin-protein ligase that promotes accumulation of 'Lys-63'-linked histone H2A and H2AX at DNA damage sites, thereby acting as a guard against excessive spreading of ubiquitinated chromatin at damaged chromosomes. In normal cells, mediates ubiquitination and degradation of isoform p19ARF/ARF of CDKN2A, a lysine-less tumor suppressor required for p53/TP53 activation under oncogenic stress. In cancer cells, however, isoform p19ARF/ARF and TRIP12 are located in different cell compartments, preventing isoform p19ARF/ARF ubiquitination and degradation. Does not mediate ubiquitination of isoform p16-INK4a of CDKN2A. Also catalyzes ubiquitination of NAE1 and SMARCE1, leading to their degradation. Ubiquitination and degradation of target proteins is regulated by interaction with proteins such as MYC, TRADD or SMARCC1, which disrupt the interaction between TRIP12 and target proteins. Mediates ubiquitination of ASXL1: following binding to N(6)-methyladenosine methylated DNA, ASXL1 is ubiquitinated by TRIP12, leading to its degradation and subsequent inactivation of the PR-DUB complex. This is E3 ubiquitin-protein ligase TRIP12 (Trip12) from Rattus norvegicus (Rat).